The sequence spans 832 residues: Protein P (832 aa).

A terminal protein domain (TP) region spans residues 1–177 (MPLSYQHFRR…FCGSPYSWEQ (177 aa)). Positions 178 to 335 (DLQHGAESIH…YCLSLIVNLL (158 aa)) are spacer. 2 disordered regions span residues 186–218 (IHQQ…QSQQ) and 239–266 (TARR…SCLY). The segment at 336-679 (EDWGPCDEYG…YLNLYPVARQ (344 aa)) is polymerase/reverse transcriptase domain (RT). The Reverse transcriptase domain occupies 346–589 (EHHIRIPRTP…YSLHFMGYVI (244 aa)). Residues Asp-418, Asp-540, and Asp-541 each contribute to the Mg(2+) site.

The protein belongs to the hepadnaviridae P protein family.

The catalysed reaction is DNA(n) + a 2'-deoxyribonucleoside 5'-triphosphate = DNA(n+1) + diphosphate. The enzyme catalyses Endonucleolytic cleavage to 5'-phosphomonoester.. Activated by host HSP70 and HSP40 in vitro to be able to bind the epsilon loop of the pgRNA. Because deletion of the RNase H region renders the protein partly chaperone-independent, the chaperones may be needed indirectly to relieve occlusion of the RNA-binding site by this domain. Inhibited by several reverse-transcriptase inhibitors: Lamivudine, Adefovir and Entecavir. Its function is as follows. Multifunctional enzyme that converts the viral RNA genome into dsDNA in viral cytoplasmic capsids. This enzyme displays a DNA polymerase activity that can copy either DNA or RNA templates, and a ribonuclease H (RNase H) activity that cleaves the RNA strand of RNA-DNA heteroduplexes in a partially processive 3'- to 5'-endonucleasic mode. Neo-synthesized pregenomic RNA (pgRNA) are encapsidated together with the P protein, and reverse-transcribed inside the nucleocapsid. Initiation of reverse-transcription occurs first by binding the epsilon loop on the pgRNA genome, and is initiated by protein priming, thereby the 5'-end of (-)DNA is covalently linked to P protein. Partial (+)DNA is synthesized from the (-)DNA template and generates the relaxed circular DNA (RC-DNA) genome. After budding and infection, the RC-DNA migrates in the nucleus, and is converted into a plasmid-like covalently closed circular DNA (cccDNA). The activity of P protein does not seem to be necessary for cccDNA generation, and is presumably released from (+)DNA by host nuclear DNA repair machinery. This is Protein P from Homo sapiens (Human).